The following is a 121-amino-acid chain: Large ribosomal subunit protein uL18 (121 aa).

The protein belongs to the universal ribosomal protein uL18 family. In terms of assembly, part of the 50S ribosomal subunit; part of the 5S rRNA/L5/L18/L25 subcomplex. Contacts the 5S and 23S rRNAs.

Its function is as follows. This is one of the proteins that bind and probably mediate the attachment of the 5S RNA into the large ribosomal subunit, where it forms part of the central protuberance. The protein is Large ribosomal subunit protein uL18 of Dehalococcoides mccartyi (strain ATCC BAA-2266 / KCTC 15142 / 195) (Dehalococcoides ethenogenes (strain 195)).